A 66-amino-acid polypeptide reads, in one-letter code: APLEPVYPGDNATPEQMAQYAAELRRYINMLTRPRYGKRDRGETLDILEWGSPHAAAPRELSPMDV.

Tyrosine 36 carries the tyrosine amide modification. Residues 60-66 (ELSPMDV) constitute a propeptide that is removed on maturation.

The protein belongs to the NPY family.

It is found in the secreted. Functionally, hormone secreted by pancreatic cells that acts as a regulator of pancreatic and gastrointestinal functions probably by signaling through the G protein-coupled receptor NPY4R2. The polypeptide is Pancreatic polypeptide prohormone (PPY) (Felis catus (Cat)).